The primary structure comprises 127 residues: PanD regulatory factor (127 aa).

Positions 1 to 127 constitute an N-acetyltransferase domain; the sequence is MKLTIIRLEK…TAQQGGWEKC (127 aa). Interaction with PanD regions lie at residues 43-48 and 66-76; these read RFNERL and LRVREVTRRRG. CoA contacts are provided by residues 66 to 68 and 72 to 79; these read LRV and TRRRGVGQ.

It belongs to the PanZ/PanM family. As to quaternary structure, interacts with PanD in the presence of CoA. Forms a heterooctameric complex composed of four PanD subunits and four PanZ subunits. Monomer in solution.

Its activity is regulated as follows. Activation of PanD processing occurs even at low CoA concentrations. In contrast, full inhibition of PanD catalytic activity only occurs at sufficiently high CoA concentrations. Functionally, controls both the activation and catalytic activity of PanD in a coenzyme A (CoA)-dependent fashion. Binding of CoA or a derivative to PanZ leads to interaction with PanD, which promotes the processing and activation of pro-PanD, and subsequent substrate-mediated inhibition of the active form of PanD. Inhibition of PanD activity is probably the primary metabolic role of PanZ, allowing negative feedback regulation of pantothenate biosynthesis by CoA. The protein is PanD regulatory factor of Escherichia coli (strain K12).